The chain runs to 365 residues: S-adenosylmethionine:tRNA ribosyltransferase-isomerase (365 aa).

This sequence belongs to the QueA family. In terms of assembly, monomer.

It localises to the cytoplasm. The catalysed reaction is 7-aminomethyl-7-carbaguanosine(34) in tRNA + S-adenosyl-L-methionine = epoxyqueuosine(34) in tRNA + adenine + L-methionine + 2 H(+). The protein operates within tRNA modification; tRNA-queuosine biosynthesis. Functionally, transfers and isomerizes the ribose moiety from AdoMet to the 7-aminomethyl group of 7-deazaguanine (preQ1-tRNA) to give epoxyqueuosine (oQ-tRNA). This Helicobacter hepaticus (strain ATCC 51449 / 3B1) protein is S-adenosylmethionine:tRNA ribosyltransferase-isomerase.